A 526-amino-acid chain; its full sequence is Lysine--tRNA ligase (526 aa).

The short motif at 30 to 38 (PSGYVHIGN) is the 'HIGH' region element. Asp-95, Cys-99, His-100, His-106, Cys-177, and Cys-199 together coordinate Zn(2+). The short motif at 280–284 (KMSGS) is the 'KMSKS' region element.

The protein belongs to the class-I aminoacyl-tRNA synthetase family. Zn(2+) serves as cofactor.

The protein resides in the cytoplasm. It carries out the reaction tRNA(Lys) + L-lysine + ATP = L-lysyl-tRNA(Lys) + AMP + diphosphate. The protein is Lysine--tRNA ligase (lysS) of Thermococcus kodakarensis (strain ATCC BAA-918 / JCM 12380 / KOD1) (Pyrococcus kodakaraensis (strain KOD1)).